Consider the following 201-residue polypeptide: Protein OPI10 homolog (201 aa).

This sequence belongs to the OPI10 family.

This chain is Protein OPI10 homolog, found in Anopheles gambiae (African malaria mosquito).